The chain runs to 204 residues: Protein XpaC (204 aa).

In double copy it causes aberrant cell morphology, filamentation and inhibits sporulation. Hydrolyzes 5-bromo-4-chloroindolyl phosphate. The chain is Protein XpaC (xpaC) from Bacillus subtilis (strain 168).